The sequence spans 155 residues: Ribosomal RNA large subunit methyltransferase H (155 aa).

Residues G104 and 123–128 (LSRLTL) each bind S-adenosyl-L-methionine.

The protein belongs to the RNA methyltransferase RlmH family. Homodimer.

It is found in the cytoplasm. It catalyses the reaction pseudouridine(1915) in 23S rRNA + S-adenosyl-L-methionine = N(3)-methylpseudouridine(1915) in 23S rRNA + S-adenosyl-L-homocysteine + H(+). Its function is as follows. Specifically methylates the pseudouridine at position 1915 (m3Psi1915) in 23S rRNA. This chain is Ribosomal RNA large subunit methyltransferase H, found in Marinomonas sp. (strain MWYL1).